The chain runs to 317 residues: 1-phosphofructokinase (317 aa).

Residues 223-228 and 254-255 contribute to the ATP site; these read SMGAEG and GD. Catalysis depends on Asp255, which acts as the Proton acceptor.

It belongs to the carbohydrate kinase PfkB family.

The catalysed reaction is beta-D-fructose 1-phosphate + ATP = beta-D-fructose 1,6-bisphosphate + ADP + H(+). Its function is as follows. Catalyzes the ATP-dependent phosphorylation of fructose-l-phosphate to fructose-l,6-bisphosphate. In Vibrio cholerae serotype O1 (strain ATCC 39315 / El Tor Inaba N16961), this protein is 1-phosphofructokinase.